The following is a 516-amino-acid chain: 7-chloro-L-tryptophan 6-halogenase KtzR (516 aa).

G6, T8, A9, E42, and A43 together coordinate FAD. Residue K71 is part of the active site. V195 serves as a coordination point for FAD. Chloride contacts are provided by T357 and G358. I359 serves as a coordination point for FAD.

This sequence belongs to the flavin-dependent halogenase family. Bacterial tryptophan halogenase subfamily.

The enzyme catalyses 7-chloro-L-tryptophan + FADH2 + chloride + O2 = 6,7-dichloro-L-tryptophan + FAD + 2 H2O. Functionally, involved in the biosynthesis of kutznerides, actinomycete-derived antifungal and antimicrobial cyclic hexadepsipeptides. Together with KtzQ, catalyzes the regiospecific dichlorination of L-tryptophan (L-Trp) to produce 6,7-dichloro-L-tryptophan. KtzR catalyzes the chlorination of 7-chloro-L-tryptophan at C6 position to yield 6,7-dichloro-L-tryptophan. Can also use L-Trp as substrate and form 6-chloro-L-tryptophan, but has a 120-fold preference for 7-chloro-L-tryptophan over L-Trp. Cannot use piperazic acid or gamma,delta-dehydropiperazic acid. This Kutzneria sp. (strain 744) protein is 7-chloro-L-tryptophan 6-halogenase KtzR.